Reading from the N-terminus, the 190-residue chain is Potassium-transporting ATPase KdpC subunit (190 aa).

Residues 10–30 (TFLFLLLITGGVYPLLTTALG) traverse the membrane as a helical segment.

The protein belongs to the KdpC family. As to quaternary structure, the system is composed of three essential subunits: KdpA, KdpB and KdpC.

It is found in the cell inner membrane. Its function is as follows. Part of the high-affinity ATP-driven potassium transport (or Kdp) system, which catalyzes the hydrolysis of ATP coupled with the electrogenic transport of potassium into the cytoplasm. This subunit acts as a catalytic chaperone that increases the ATP-binding affinity of the ATP-hydrolyzing subunit KdpB by the formation of a transient KdpB/KdpC/ATP ternary complex. The chain is Potassium-transporting ATPase KdpC subunit from Escherichia coli (strain SMS-3-5 / SECEC).